Here is a 250-residue protein sequence, read N- to C-terminus: Sugar fermentation stimulation protein homolog (250 aa).

Belongs to the SfsA family.

This Trichodesmium erythraeum (strain IMS101) protein is Sugar fermentation stimulation protein homolog.